A 347-amino-acid chain; its full sequence is GMP reductase (347 aa).

An NADP(+)-binding site is contributed by 108–131; that stretch reads ADFEKTVQILALDPALNFVCIDVA. Positions 181 and 183 each coordinate K(+). The Thioimidate intermediate role is filled by C186. Position 216–239 (216–239) interacts with NADP(+); that stretch reads IVSDGGCTMPGDVAKAFGGGADFV.

This sequence belongs to the IMPDH/GMPR family. GuaC type 1 subfamily. In terms of assembly, homotetramer.

It carries out the reaction IMP + NH4(+) + NADP(+) = GMP + NADPH + 2 H(+). Its function is as follows. Catalyzes the irreversible NADPH-dependent deamination of GMP to IMP. It functions in the conversion of nucleobase, nucleoside and nucleotide derivatives of G to A nucleotides, and in maintaining the intracellular balance of A and G nucleotides. The protein is GMP reductase of Salmonella paratyphi B (strain ATCC BAA-1250 / SPB7).